The chain runs to 312 residues: Glyoxylate/hydroxypyruvate reductase A (312 aa).

The active site involves arginine 227. Histidine 275 acts as the Proton donor in catalysis.

Belongs to the D-isomer specific 2-hydroxyacid dehydrogenase family. GhrA subfamily.

The protein resides in the cytoplasm. It catalyses the reaction glycolate + NADP(+) = glyoxylate + NADPH + H(+). The catalysed reaction is (R)-glycerate + NAD(+) = 3-hydroxypyruvate + NADH + H(+). The enzyme catalyses (R)-glycerate + NADP(+) = 3-hydroxypyruvate + NADPH + H(+). In terms of biological role, catalyzes the NADPH-dependent reduction of glyoxylate and hydroxypyruvate into glycolate and glycerate, respectively. This is Glyoxylate/hydroxypyruvate reductase A from Salmonella paratyphi C (strain RKS4594).